Consider the following 81-residue polypeptide: Neurotoxin LmNaTx11.1 (81 aa).

The first 18 residues, 1-18 (MKIVIIFFIAMMAVGVYS), serve as a signal peptide directing secretion. Residues 19–80 (KDGYLVKKNG…PTYPSSKTCS (62 aa)) enclose the LCN-type CS-alpha/beta domain. 4 cysteine pairs are disulfide-bonded: Cys29–Cys79, Cys33–Cys56, Cys42–Cys61, and Cys46–Cys63.

The protein belongs to the long (4 C-C) scorpion toxin superfamily. Sodium channel inhibitor family. Beta subfamily. As to expression, expressed by the venom gland.

Its subcellular location is the secreted. Binds voltage-independently at site-4 of sodium channels (Nav) and shift the voltage of activation toward more negative potentials thereby affecting sodium channel activation and promoting spontaneous and repetitive firing. This is Neurotoxin LmNaTx11.1 from Lychas mucronatus (Chinese swimming scorpion).